The primary structure comprises 370 residues: Phosphoserine aminotransferase (370 aa).

Arg42 contributes to the L-glutamate binding site. Positions 108, 158, 182, and 205 each coordinate pyridoxal 5'-phosphate. N6-(pyridoxal phosphate)lysine is present on Lys206. 247–248 (NT) contacts pyridoxal 5'-phosphate.

Belongs to the class-V pyridoxal-phosphate-dependent aminotransferase family. SerC subfamily. In terms of assembly, homodimer. Requires pyridoxal 5'-phosphate as cofactor.

The protein resides in the cytoplasm. The catalysed reaction is O-phospho-L-serine + 2-oxoglutarate = 3-phosphooxypyruvate + L-glutamate. It catalyses the reaction 4-(phosphooxy)-L-threonine + 2-oxoglutarate = (R)-3-hydroxy-2-oxo-4-phosphooxybutanoate + L-glutamate. Its pathway is amino-acid biosynthesis; L-serine biosynthesis; L-serine from 3-phospho-D-glycerate: step 2/3. It functions in the pathway cofactor biosynthesis; pyridoxine 5'-phosphate biosynthesis; pyridoxine 5'-phosphate from D-erythrose 4-phosphate: step 3/5. In terms of biological role, catalyzes the reversible conversion of 3-phosphohydroxypyruvate to phosphoserine and of 3-hydroxy-2-oxo-4-phosphonooxybutanoate to phosphohydroxythreonine. This is Phosphoserine aminotransferase from Albidiferax ferrireducens (strain ATCC BAA-621 / DSM 15236 / T118) (Rhodoferax ferrireducens).